We begin with the raw amino-acid sequence, 694 residues long: Heat shock protein HSP 90-alpha (694 aa).

Residues threonine 5 and threonine 7 each carry the phosphothreonine; by PRKDC modification. Residues 9 to 236 (DQPMEEEEVE…DKEVSDDEAK (228 aa)) form an interaction with NR3C1 region. Asparagine 51 is an ATP binding site. Lysine 58 and lysine 84 each carry N6-acetyllysine. The ATP site is built by aspartate 93, lysine 112, and phenylalanine 138. Positions 228–241 (KEVSDDEAKQPDDK) are enriched in basic and acidic residues. Positions 228–275 (KEVSDDEAKQPDDKPEIEDVGSDEEEEEKKDGDIDQEELNKTKPIWTR) are disordered. 2 positions are modified to phosphoserine: serine 231 and serine 249. A compositionally biased stretch (acidic residues) spans 242 to 255 (PEIEDVGSDEEEEE). Over residues 256 to 268 (KKDGDIDQEELNK) the composition is skewed to basic and acidic residues. An interaction with NR3C1 region spans residues 258-578 (DGDIDQEELN…TANMERIMKA (321 aa)). The interaction with FNIP2 and TSC1 stretch occupies residues 261–582 (IDQEELNKTK…ERIMKAQALR (322 aa)). The interaction with FLCN and FNIP1 stretch occupies residues 261-694 (IDQEELNKTK…DDTSRMEEVD (434 aa)). Residue tyrosine 289 is modified to Phosphotyrosine. Residue arginine 376 coordinates ATP. Lysine 419 is subject to N6-acetyllysine. Serine 429 carries the phosphoserine modification. Lysine 434 carries the post-translational modification N6-acetyllysine. Residue serine 452 is modified to Phosphoserine. The residue at position 465 (lysine 465) is an N6-acetyllysine. Position 468 is a phosphotyrosine (tyrosine 468). Residue lysine 547 is modified to N6-acetyllysine. Cysteine 560 bears the S-nitrosocysteine mark. Residues 590 to 693 (MAAKKHLEVN…DDDTSRMEEV (104 aa)) are interaction with NR1D1. Serine 603 carries the phosphoserine modification. A required for homodimerization region spans residues 644 to 694 (QTHANRIYRMIKLGLGIDEDDPTADDTAAAVTEEMPPLEGDDDTSRMEEVD). The segment at 662–694 (EDDPTADDTAAAVTEEMPPLEGDDDTSRMEEVD) is disordered. The span at 668 to 677 (DDTAAAVTEE) shows a compositional bias: low complexity. The TPR repeat-binding motif lies at 685 to 694 (DDTSRMEEVD). Positions 690-694 (MEEVD) are essential for interaction with SMYD3, TSC1 and STIP1/HOP. The segment at 691-694 (EEVD) is essential for interaction with SGTA and TTC1.

It belongs to the heat shock protein 90 family. Homodimer. Identified in NR3C1/GCR steroid receptor-chaperone complexes formed at least by NR3C1, HSP90AA1 and a variety of proteins containing TPR repeats such as FKBP4, FKBP5, PPID, PPP5C or STIP1. Forms a complex containing HSP90AA1, TSC1 and TSC2; TSC1 is required to recruit TCS2 to the complex. The closed form interacts (via the middle domain and TPR repeat-binding motif) with co-chaperone TSC1 (via C-terminus). Interacts with TOM34. Interacts with TERT; the interaction, together with PTGES3, is required for correct assembly and stabilization of the TERT holoenzyme complex. Interacts with CHORDC1 and DNAJC7. Interacts with STUB1 and UBE2N; may couple the chaperone and ubiquitination systems. Interacts (via TPR repeat-binding motif) with PPP5C (via TPR repeats); the interaction is direct and activates PPP5C phosphatase activity. Following LPS binding, may form a complex with CXCR4, GDF5 and HSPA8. Interacts with KSR1. Interacts with co-chaperone CDC37 (via C-terminus); the interaction inhibits HSP90AA1 ATPase activity. May interact with NWD1. Interacts with FNIP1 and FNIP2; the interaction inhibits HSP90AA1 ATPase activity. Interacts with co-chaperone AHSA1 (phosphorylated on 'Tyr-223'); the interaction activates HSP90AA1 ATPase activity and results in the dissociation of TSC1 from HSP90AA1. Interacts with FLCN in the presence of FNIP1. Interacts with HSP70, STIP1 and PTGES3. Interacts with SMYD3; this interaction enhances SMYD3 histone-lysine N-methyltransferase. Interacts with SGTA (via TPR repeats). Interacts with TTC1 (via TPR repeats). Interacts with HSF1 in an ATP-dependent manner. Interacts with MET; the interaction suppresses MET kinase activity. Interacts with ERBB2 in an ATP-dependent manner; the interaction suppresses ERBB2 kinase activity. Interacts with HIF1A, KEAP1 and RHOBTB2. Interacts with HSF1; this interaction is decreased in a IER5-dependent manner, promoting HSF1 accumulation in the nucleus, homotrimerization and DNA-binding activities. Interacts with STUB1 and SMAD3. Interacts with HSP90AB1; interaction is constitutive. Interacts with HECTD1 (via N-terminus). Interacts with NR3C1 (via domain NR LBD) and NR1D1 (via domain NR LBD). Interacts with NLPR12. Interacts with PDCL3. Interacts with TOMM70; the interaction is required for preprotein mitochondrial import. Interacts with TOMM70, IRF3 and TBK1; the interactions are direct and mediate the association of TOMM70 with IRF3 and TBK1. Forms a complex with ASL, ASS1 and NOS2; the complex regulates cell-autonomous L-arginine synthesis and citrulline recycling while channeling extracellular L-arginine to nitric oxide synthesis pathway. Post-translationally, ISGylated. S-nitrosylated; negatively regulates the ATPase activity and the activation of eNOS by HSP90AA1. In terms of processing, ubiquitinated via 'Lys-63'-linked polyubiquitination by HECTD1. Ubiquitination promotes translocation into the cytoplasm away from the membrane and secretory pathways.

The protein resides in the nucleus. Its subcellular location is the cytoplasm. It is found in the melanosome. The protein localises to the cell membrane. It localises to the mitochondrion. It carries out the reaction ATP + H2O = ADP + phosphate + H(+). Its activity is regulated as follows. In the resting state, through the dimerization of its C-terminal domain, HSP90 forms a homodimer which is defined as the open conformation. Upon ATP-binding, the N-terminal domain undergoes significant conformational changes and comes in contact to form an active closed conformation. After HSP90 finishes its chaperoning tasks of assisting the proper folding, stabilization and activation of client proteins under the active state, ATP molecule is hydrolyzed to ADP which then dissociates from HSP90 and directs the protein back to the resting state. Co-chaperone TSC1 promotes ATP binding and inhibits HSP90AA1 ATPase activity. Binding to phosphorylated AHSA1 promotes HSP90AA1 ATPase activity. Inhibited by geldanamycin, Ganetespib (STA-9090) and SNX-2112. Its function is as follows. Molecular chaperone that promotes the maturation, structural maintenance and proper regulation of specific target proteins involved for instance in cell cycle control and signal transduction. Undergoes a functional cycle that is linked to its ATPase activity which is essential for its chaperone activity. This cycle probably induces conformational changes in the client proteins, thereby causing their activation. Interacts dynamically with various co-chaperones that modulate its substrate recognition, ATPase cycle and chaperone function. Engages with a range of client protein classes via its interaction with various co-chaperone proteins or complexes, that act as adapters, simultaneously able to interact with the specific client and the central chaperone itself. Recruitment of ATP and co-chaperone followed by client protein forms a functional chaperone. After the completion of the chaperoning process, properly folded client protein and co-chaperone leave HSP90 in an ADP-bound partially open conformation and finally, ADP is released from HSP90 which acquires an open conformation for the next cycle. Plays a critical role in mitochondrial import, delivers preproteins to the mitochondrial import receptor TOMM70. Apart from its chaperone activity, it also plays a role in the regulation of the transcription machinery. HSP90 and its co-chaperones modulate transcription at least at three different levels. In the first place, they alter the steady-state levels of certain transcription factors in response to various physiological cues. Second, they modulate the activity of certain epigenetic modifiers, such as histone deacetylases or DNA methyl transferases, and thereby respond to the change in the environment. Third, they participate in the eviction of histones from the promoter region of certain genes and thereby turn on gene expression. Binds bacterial lipopolysaccharide (LPS) and mediates LPS-induced inflammatory response, including TNF secretion by monocytes. Antagonizes STUB1-mediated inhibition of TGF-beta signaling via inhibition of STUB1-mediated SMAD3 ubiquitination and degradation. Mediates the association of TOMM70 with IRF3 or TBK1 in mitochondrial outer membrane which promotes host antiviral response. The chain is Heat shock protein HSP 90-alpha (HSP90AA1) from Oryctolagus cuniculus (Rabbit).